Consider the following 244-residue polypeptide: Probable transcriptional regulatory protein DNO_1179 (244 aa).

It belongs to the TACO1 family.

It localises to the cytoplasm. The protein is Probable transcriptional regulatory protein DNO_1179 of Dichelobacter nodosus (strain VCS1703A).